Consider the following 134-residue polypeptide: MIYMLDTNIIIYLMKNRPKIIAERVSQLLPNDRLVMSFITYAELIKGAFGSQNYEQSIRAIELLTERVNVLYPNEQICLHYGKWANTLKKQGRPIGNNDLWIACHALSLNAVLITHNVKEFQRITDLQWQDWTK.

Positions 3–132 constitute a PINc domain; the sequence is YMLDTNIIIY…RITDLQWQDW (130 aa). Residues Asp6 and Asp99 each contribute to the Mg(2+) site.

This sequence belongs to the PINc/VapC protein family. In terms of assembly, forms a complex with VapB1. Mg(2+) is required as a cofactor.

In terms of biological role, toxic component of a type II toxin-antitoxin (TA) system. Upon expression in E.coli inhibits growth in liquid culture. Its toxic effect is neutralized by coexpression with antitoxin VapB1. Degrades RNA but not ss- or ds-DNA in vitro, degradation is inhibited by VapB1 antitoxin. The chain is Ribonuclease VapC1 from Haemophilus influenzae (strain R2866).